The following is a 446-amino-acid chain: Probable rhamnogalacturonase A (446 aa).

A signal peptide spans 1-18 (MPALPILALALAPLLVNG). Cysteines 39 and 65 form a disulfide. Asn50, Asn115, and Asn124 each carry an N-linked (GlcNAc...) asparagine glycan. Residue Asp216 is the Proton donor of the active site. A disulfide bridge links Cys218 with Cys235. Asn236 and Asn281 each carry an N-linked (GlcNAc...) asparagine glycan. His291 is a catalytic residue. Residue Asn318 is glycosylated (N-linked (GlcNAc...) asparagine). 2 disulfide bridges follow: Cys341–Cys347 and Cys369–Cys378.

Belongs to the glycosyl hydrolase 28 family.

The protein localises to the secreted. The catalysed reaction is Endohydrolysis of alpha-D-GalA-(1-&gt;2)-alpha-L-Rha glycosidic bond in the rhamnogalacturonan I backbone with initial inversion of anomeric configuration releasing oligosaccharides with beta-D-GalA at the reducing end.. Pectinolytic enzymes consist of four classes of enzymes: pectine lyase, polygalacturonase, pectin methylesterase and rhamnogalacturonase. Hydrolyzes alpha-D-galacturonopyranosyl-(1,2)-alpha-L-rhamnopyranosyl linkages in the backbone of the hairy regions of pectins. The sequence is that of Probable rhamnogalacturonase A (rhgA) from Aspergillus niger (strain ATCC MYA-4892 / CBS 513.88 / FGSC A1513).